The chain runs to 307 residues: Secondary metabolism regulator LAE1 (307 aa).

This sequence belongs to the methyltransferase superfamily. LaeA methyltransferase family. In terms of assembly, component of the heterotrimeric velvet complex composed of LAE1, VEL1 and VEL2; VEL1 acting as a bridging protein between LAE1 and VEL2.

The protein resides in the nucleus. The catalysed reaction is L-methionyl-[protein] + S-adenosyl-L-methionine = S-methyl-L-methionyl-[protein] + S-adenosyl-L-homocysteine. Functionally, methyltransferase that performs automethylation. No other methyl-accepting substrate has been identified yet. Component of the velvet transcription factor complex that acts as a global regulator for secondary metabolite gene expression. Controls the expression of the T-toxin gene cluster. Promotes oxidative stress tolerance and acts as a virulence factors during infection. Negatively regulate mycelial pigmentation and controls sexual development, as well as asexual development during vegetative growth. The chain is Secondary metabolism regulator LAE1 from Cochliobolus heterostrophus (strain C5 / ATCC 48332 / race O) (Southern corn leaf blight fungus).